The primary structure comprises 542 residues: MTRYIFVTGGVVSSLGKGIASASLAAILEARGLKVTMLKLDPYINVDPGTMSPFQHGEVFVTHDGAETDLDLGHYERFIRTTMTQNNNFTTGRIYEHVLRKERRGDYLGATIQVIPHITDEIKRRIIKGAGDADVALVEIGGTVGDIESQPFLEAIRQLRVEVGSKRAMLMHLTLVPYIATAGETKTKPTQHSVKELRSIGLQPDVLICRSDHPVDASSRRKIALFTNVEERAVISLEDVDTIYKIPGVLHAQGLDDFVVERFGLQCNSADLSEWDKVVDAKLNPEQEVTIAMVGKYMELLDAYKSLIEAMSHAGITNRTKVNLRYIDSEDIENQGTSLLEGADAILVPGGFGLRGVEGKITAVQYARENKVPYLGICLGMQVAVIEFARNVMGWKDANSTEFDRNSGHPVVGLITEWADATGAVETRTEASDLGGTMRLGAQDCQIVAGSKVHDCYGKDVITERHRHRYEVNNNLLPQLMDAGLVVSGRSEDGALVEVVESKDHPWFVACQFHPEFTSTPRDGHPLFSGFVKAALAQKNKA.

An amidoligase domain region spans residues Met1 to Leu265. Position 13 (Ser13) interacts with CTP. Ser13 lines the UTP pocket. Residues Ser14–Ile19 and Asp71 contribute to the ATP site. Residues Asp71 and Glu139 each contribute to the Mg(2+) site. Residues Asp146–Glu148, Lys186–Gln191, and Lys222 contribute to the CTP site. UTP is bound by residues Lys186–Gln191 and Lys222. The 252-residue stretch at Thr290 to Lys541 folds into the Glutamine amidotransferase type-1 domain. Gly351 provides a ligand contact to L-glutamine. Cys378 acts as the Nucleophile; for glutamine hydrolysis in catalysis. Residues Leu379–Gln382, Glu402, and Arg469 contribute to the L-glutamine site. Residues His514 and Glu516 contribute to the active site.

The protein belongs to the CTP synthase family. Homotetramer.

The enzyme catalyses UTP + L-glutamine + ATP + H2O = CTP + L-glutamate + ADP + phosphate + 2 H(+). It catalyses the reaction L-glutamine + H2O = L-glutamate + NH4(+). The catalysed reaction is UTP + NH4(+) + ATP = CTP + ADP + phosphate + 2 H(+). The protein operates within pyrimidine metabolism; CTP biosynthesis via de novo pathway; CTP from UDP: step 2/2. Its activity is regulated as follows. Allosterically activated by GTP, when glutamine is the substrate; GTP has no effect on the reaction when ammonia is the substrate. The allosteric effector GTP functions by stabilizing the protein conformation that binds the tetrahedral intermediate(s) formed during glutamine hydrolysis. Inhibited by the product CTP, via allosteric rather than competitive inhibition. Functionally, catalyzes the ATP-dependent amination of UTP to CTP with either L-glutamine or ammonia as the source of nitrogen. Regulates intracellular CTP levels through interactions with the four ribonucleotide triphosphates. The sequence is that of CTP synthase from Pseudomonas entomophila (strain L48).